Here is a 536-residue protein sequence, read N- to C-terminus: Caspase recruitment domain-containing protein 9 (536 aa).

Ser2 is subject to Phosphoserine. The Zn(2+) site is built by Asp3, Cys10, and His73. The CARD domain maps to 6–98 (NDDECWSALE…QLYRKVTGKE (93 aa)). A linker region spans residues 99–116 (PARVFSMIIDASGESGLT). 2 coiled-coil regions span residues 117–277 (QLLM…HRNS) and 303–420 (SLRK…QLDM). Residue Lys125 forms a Glycyl lysine isopeptide (Lys-Gly) (interchain with G-Cter in ubiquitin) linkage. Thr231 carries the phosphothreonine modification. A Phosphoserine modification is found at Ser277. Ser424, Ser425, Ser431, Ser451, Ser461, Ser483, and Ser498 each carry phosphoserine. Positions 425–451 (SDLEDSSPRNSQELSLPQDLEEDAQLS) are disordered. The segment at 472 to 536 (KHLSQTHDTV…GSDNTDTEGS (65 aa)) is disordered. Over residues 487–502 (PPEKERRRLKESFENY) the composition is skewed to basic and acidic residues. 2 positions are modified to phosphothreonine; by CK2: Thr531 and Thr533.

In terms of assembly, monomer. Homodimer; homodimerization is mediated by the CARD domain which forms an extensive interaction with the adjacent linker and coiled-coil regions; leads to an autoinhibited state. Homomultimer; polymerizes following activation, forming a nucleating helical template that seeds BCL10-filament formation via a CARD-CARD interaction. Interacts (via CARD domain) with BCL10 (via CARD domain); interaction takes place following CARD9 activation and polymerization, leading to the formation of a filamentous CBM complex assembly. Component of a CBM complex (CARD9-BCL10, MALT1), composed of CARD9, BCL10 and MALT1. Interacts with RASGRF1. Interacts with NOD2 (via NACHT domain); interaction is direct. Interacts with RIPK2. Interacts with VHL; without leading to protein degradation. Post-translationally, phosphorylated at Thr-231 by PRKCD downstream of C-type lectin receptors activation: phosphorylation promotes interaction with BCL10, followed by activation of NF-kappa-B and MAP kinase p38 pathways. Phosphorylated at Thr-531 and Thr-533 by CK2 following interaction with VHL, leading to inhibit the ability to activate NF-kappa-B. Ubiquitinated at Lys-125 via 'Lys-27'-linked ubiquitin by TRIM62 downstream of C-type lectin receptors activation; leading to CARD9 activation, followed by activation of NF-kappa-B and MAP kinase p38 pathways. Deubiquitinated at Lys-125 by USP15, inhibiting CARD9.

It localises to the cytoplasm. Maintained in an autoinhibited state via homodimerization in which the CARD domain forms an extensive interaction with the adjacent linker and coiled-coil regions. Activation downstream of C-type lectin receptors, by phosphorylation by PRKCD and/or ubiquitination by TRIM62, triggers disruption of the CARD domain-coiled coil interface, CARD9 homooligomerization and BCL10 recruitment, followed by activation of NF-kappa-B and MAP kinase p38 pathways. Zinc-binding inhibits activation by stabilizing the CARD ground-state conformation and restricting its capacity to form BCL10-nucleating filaments. Adapter protein that plays a key role in innate immune response against fungi by forming signaling complexes downstream of C-type lectin receptors. CARD9-mediated signals are essential for antifungal immunity against a subset of fungi from the phylum Ascomycota. Transduces signals in myeloid cells downstream of C-type lectin receptors CLEC7A (dectin-1), CLEC6A (dectin-2) and CLEC4E (Mincle), which detect pathogen-associated molecular pattern metabolites (PAMPs), such as fungal carbohydrates, and trigger CARD9 activation. Upon activation, CARD9 homooligomerizes to form a nucleating helical template that recruits BCL10 via CARD-CARD interaction, thereby promoting polymerization of BCL10 and subsequent recruitment of MALT1: this leads to activation of NF-kappa-B and MAP kinase p38 (MAPK11, MAPK12, MAPK13 and/or MAPK14) pathways which stimulate expression of genes encoding pro-inflammatory cytokines and chemokines. CARD9 signaling in antigen-presenting cells links innate sensing of fungi to the activation of adaptive immunity and provides a cytokine milieu that induces the development and subsequent of interleukin 17-producing T helper (Th17) cells. Also involved in activation of myeloid cells via classical ITAM-associated receptors and TLR: required for TLR-mediated activation of MAPK, while it is not required for TLR-induced activation of NF-kappa-B. CARD9 can also be engaged independently of BCL10: forms a complex with RASGRF1 downstream of C-type lectin receptors, which recruits and activates HRAS, leading to ERK activation and the production of cytokines. Acts as an important regulator of the intestinal commensal fungi (mycobiota) component of the gut microbiota. Plays an essential role in antifungal immunity against dissemination of gut fungi: acts by promoting induction of antifungal IgG antibodies response in CX3CR1(+) macrophages to confer protection against disseminated C.albicans or C.auris infection. Also mediates immunity against other pathogens, such as certain bacteria, viruses and parasites; CARD9 signaling is however redundant with other innate immune responses. In response to L.monocytogenes infection, required for the production of inflammatory cytokines activated by intracellular peptidoglycan: acts by connecting NOD2 recognition of peptidoglycan to downstream activation of MAP kinases (MAPK) without activating NF-kappa-B. The sequence is that of Caspase recruitment domain-containing protein 9 from Rattus norvegicus (Rat).